Consider the following 281-residue polypeptide: Pantothenate synthetase (281 aa).

30 to 37 provides a ligand contact to ATP; it reads MGYLHEGH. H37 (proton donor) is an active-site residue. Q61 provides a ligand contact to (R)-pantoate. Q61 serves as a coordination point for beta-alanine. 147-150 contributes to the ATP binding site; the sequence is GEKD. Q153 serves as a coordination point for (R)-pantoate. Residues I176 and 184-187 contribute to the ATP site; that span reads KSSR.

It belongs to the pantothenate synthetase family. As to quaternary structure, homodimer.

The protein resides in the cytoplasm. It catalyses the reaction (R)-pantoate + beta-alanine + ATP = (R)-pantothenate + AMP + diphosphate + H(+). It functions in the pathway cofactor biosynthesis; (R)-pantothenate biosynthesis; (R)-pantothenate from (R)-pantoate and beta-alanine: step 1/1. Its function is as follows. Catalyzes the condensation of pantoate with beta-alanine in an ATP-dependent reaction via a pantoyl-adenylate intermediate. This Clostridium botulinum (strain Okra / Type B1) protein is Pantothenate synthetase.